The following is a 184-amino-acid chain: MSAEQIAGTGVIHGRFQPLHLGHLEYLLAGAERCRTLVVGITNPDPWTTTEETTDPERGLPESNPCTFYERYLMVEGALTEAGVSHERLRIVPFPHSFPERLAHYAPADARYFVTVYDDWGDAKLDRFHALGLRTEVMWRRTDKPVSGGRVRRSIAEGQPWEHLVPPAVARVVKECGIDERIRA.

It catalyses the reaction phosphonoformate + CTP = CMP-5'-phosphonoformate + diphosphate. It participates in secondary metabolite biosynthesis; bialaphos biosynthesis. Catalyzes the displacement of the beta- and gamma-phosphates of CTP by phosphonoformate to produce CMP-5'-phosphonoformate, an intermediate in the biosynthesis of phosphinothricin tripeptide (PTT), also known as bialaphos (BA), a natural-product antibiotic and potent herbicide. The sequence is that of Phosphonoformate cytidylyltransferase from Streptomyces viridochromogenes (strain DSM 40736 / JCM 4977 / BCRC 1201 / Tue 494).